The primary structure comprises 338 residues: Glycerol-3-phosphate dehydrogenase [NAD(P)+] 1 (338 aa).

Ser-11, Trp-12, His-32, Arg-33, and Lys-109 together coordinate NADPH. Sn-glycerol 3-phosphate is bound by residues Lys-109, Gly-140, and Ser-142. Residue Ala-144 coordinates NADPH. Residues Lys-195, Asp-248, Ser-258, Arg-259, and Asn-260 each coordinate sn-glycerol 3-phosphate. Residue Lys-195 is the Proton acceptor of the active site. Arg-259 lines the NADPH pocket. Residues Val-283 and Glu-285 each coordinate NADPH.

This sequence belongs to the NAD-dependent glycerol-3-phosphate dehydrogenase family.

Its subcellular location is the cytoplasm. The enzyme catalyses sn-glycerol 3-phosphate + NAD(+) = dihydroxyacetone phosphate + NADH + H(+). The catalysed reaction is sn-glycerol 3-phosphate + NADP(+) = dihydroxyacetone phosphate + NADPH + H(+). The protein operates within membrane lipid metabolism; glycerophospholipid metabolism. Catalyzes the reduction of the glycolytic intermediate dihydroxyacetone phosphate (DHAP) to sn-glycerol 3-phosphate (G3P), the key precursor for phospholipid synthesis. The sequence is that of Glycerol-3-phosphate dehydrogenase [NAD(P)+] 1 from Lactobacillus delbrueckii subsp. bulgaricus (strain ATCC 11842 / DSM 20081 / BCRC 10696 / JCM 1002 / NBRC 13953 / NCIMB 11778 / NCTC 12712 / WDCM 00102 / Lb 14).